Here is a 400-residue protein sequence, read N- to C-terminus: Phosphoglycerate kinase (400 aa).

Substrate is bound by residues 24–26 (DFN), Arg39, 62–65 (HFGR), Arg121, and Arg154. ATP is bound by residues Lys205, Gly296, Glu327, and 356-359 (GGDS).

It belongs to the phosphoglycerate kinase family. As to quaternary structure, monomer.

It localises to the cytoplasm. It catalyses the reaction (2R)-3-phosphoglycerate + ATP = (2R)-3-phospho-glyceroyl phosphate + ADP. It participates in carbohydrate degradation; glycolysis; pyruvate from D-glyceraldehyde 3-phosphate: step 2/5. This Rippkaea orientalis (strain PCC 8801 / RF-1) (Cyanothece sp. (strain PCC 8801)) protein is Phosphoglycerate kinase.